The sequence spans 284 residues: Plastid-lipid-associated protein 6, chloroplastic (284 aa).

Over residues 1–11 (MATSSTFSSLL) the composition is skewed to low complexity. The disordered stretch occupies residues 1-47 (MATSSTFSSLLPSPPALLSDHRSPPPSIRYSFSPLTTPKSSRLGFTV). A chloroplast-targeting transit peptide spans 1-72 (MATSSTFSSL…SIGGESDPPP (72 aa)). Phosphoserine is present on residues serine 96, serine 105, serine 148, serine 151, and serine 155.

It belongs to the PAP/fibrillin family. Part of the Photosystem II light-harvesting complex (LHCII). Phosphorylated as part of a basal defense response.

It is found in the plastid. The protein resides in the chloroplast. Its subcellular location is the plastoglobule. Required for plastoglobule development and resistance to multiple stresses. Regulates plastoglobule osmiophilic content. May be involved in the transport of lipophilic antioxidants in and out of the plastoglobule. This is Plastid-lipid-associated protein 6, chloroplastic from Arabidopsis thaliana (Mouse-ear cress).